The sequence spans 427 residues: Glutamate-1-semialdehyde 2,1-aminomutase (427 aa).

Lys-265 is subject to N6-(pyridoxal phosphate)lysine.

Belongs to the class-III pyridoxal-phosphate-dependent aminotransferase family. HemL subfamily. Homodimer. Requires pyridoxal 5'-phosphate as cofactor.

The protein localises to the cytoplasm. It carries out the reaction (S)-4-amino-5-oxopentanoate = 5-aminolevulinate. The protein operates within porphyrin-containing compound metabolism; protoporphyrin-IX biosynthesis; 5-aminolevulinate from L-glutamyl-tRNA(Glu): step 2/2. The polypeptide is Glutamate-1-semialdehyde 2,1-aminomutase (Neisseria meningitidis serogroup C / serotype 2a (strain ATCC 700532 / DSM 15464 / FAM18)).